We begin with the raw amino-acid sequence, 550 residues long: CTP synthase (550 aa).

Residues 1 to 270 form an amidoligase domain region; sequence MTKYVFVTGG…DNIVCEALGL (270 aa). Residue Ser-13 participates in CTP binding. Ser-13 contacts UTP. Residues 14-19 and Asp-71 contribute to the ATP site; that span reads SLGKGI. Mg(2+)-binding residues include Asp-71 and Glu-144. CTP contacts are provided by residues 151-153, 191-196, and Lys-227; these read DIE and KTKPTQ. Residues 191 to 196 and Lys-227 each bind UTP; that span reads KTKPTQ. In terms of domain architecture, Glutamine amidotransferase type-1 spans 295-545; that stretch reads TIGMVGKYVD…IRAALEHKAQ (251 aa). Gly-356 is an L-glutamine binding site. Cys-383 (nucleophile; for glutamine hydrolysis) is an active-site residue. L-glutamine is bound by residues 384–387 and Glu-407; that span reads LGMQ. Positions 430-459 are disordered; sequence VERRDNSSDLGGTMRKGAQRCPIRPGTRAQ. An L-glutamine-binding site is contributed by Arg-473. Residues His-518 and Glu-520 contribute to the active site.

It belongs to the CTP synthase family. Homotetramer.

It catalyses the reaction UTP + L-glutamine + ATP + H2O = CTP + L-glutamate + ADP + phosphate + 2 H(+). The catalysed reaction is L-glutamine + H2O = L-glutamate + NH4(+). It carries out the reaction UTP + NH4(+) + ATP = CTP + ADP + phosphate + 2 H(+). It participates in pyrimidine metabolism; CTP biosynthesis via de novo pathway; CTP from UDP: step 2/2. Its activity is regulated as follows. Allosterically activated by GTP, when glutamine is the substrate; GTP has no effect on the reaction when ammonia is the substrate. The allosteric effector GTP functions by stabilizing the protein conformation that binds the tetrahedral intermediate(s) formed during glutamine hydrolysis. Inhibited by the product CTP, via allosteric rather than competitive inhibition. Its function is as follows. Catalyzes the ATP-dependent amination of UTP to CTP with either L-glutamine or ammonia as the source of nitrogen. Regulates intracellular CTP levels through interactions with the four ribonucleotide triphosphates. This is CTP synthase from Bordetella parapertussis (strain 12822 / ATCC BAA-587 / NCTC 13253).